The sequence spans 334 residues: tRNA U34 carboxymethyltransferase (334 aa).

Carboxy-S-adenosyl-L-methionine contacts are provided by residues lysine 91, tryptophan 105, lysine 110, glycine 130, 152–154 (DPT), 181–182 (IE), methionine 196, tyrosine 200, and arginine 315.

Belongs to the class I-like SAM-binding methyltransferase superfamily. CmoB family. As to quaternary structure, homotetramer.

It catalyses the reaction carboxy-S-adenosyl-L-methionine + 5-hydroxyuridine(34) in tRNA = 5-carboxymethoxyuridine(34) in tRNA + S-adenosyl-L-homocysteine + H(+). Functionally, catalyzes carboxymethyl transfer from carboxy-S-adenosyl-L-methionine (Cx-SAM) to 5-hydroxyuridine (ho5U) to form 5-carboxymethoxyuridine (cmo5U) at position 34 in tRNAs. This Klebsiella pneumoniae (strain 342) protein is tRNA U34 carboxymethyltransferase.